The primary structure comprises 504 residues: Maturase K (504 aa).

This sequence belongs to the intron maturase 2 family. MatK subfamily.

The protein resides in the plastid. It localises to the chloroplast. Its function is as follows. Usually encoded in the trnK tRNA gene intron. Probably assists in splicing its own and other chloroplast group II introns. The chain is Maturase K from Alliaria petiolata (Garlic mustard).